We begin with the raw amino-acid sequence, 406 residues long: uncharacterized protein (406 aa).

Polar residues predominate over residues S136–P153. Positions S136–E157 are disordered.

This is an uncharacterized protein from Rattus norvegicus (Rat).